Consider the following 386-residue polypeptide: Succinate--CoA ligase [ADP-forming] subunit beta (386 aa).

One can recognise an ATP-grasp domain in the interval Lys9–Glu244. ATP contacts are provided by residues Lys46, Gly53–Gly55, Glu99, Leu102, and Glu107. Mg(2+)-binding residues include Asn199 and Asp213. Substrate-binding positions include Asn264 and Gly321–Leu323.

This sequence belongs to the succinate/malate CoA ligase beta subunit family. In terms of assembly, heterotetramer of two alpha and two beta subunits. Mg(2+) serves as cofactor.

It carries out the reaction succinate + ATP + CoA = succinyl-CoA + ADP + phosphate. It catalyses the reaction GTP + succinate + CoA = succinyl-CoA + GDP + phosphate. Its pathway is carbohydrate metabolism; tricarboxylic acid cycle; succinate from succinyl-CoA (ligase route): step 1/1. Succinyl-CoA synthetase functions in the citric acid cycle (TCA), coupling the hydrolysis of succinyl-CoA to the synthesis of either ATP or GTP and thus represents the only step of substrate-level phosphorylation in the TCA. The beta subunit provides nucleotide specificity of the enzyme and binds the substrate succinate, while the binding sites for coenzyme A and phosphate are found in the alpha subunit. In Desulfatibacillum aliphaticivorans, this protein is Succinate--CoA ligase [ADP-forming] subunit beta.